Here is a 522-residue protein sequence, read N- to C-terminus: Target of rapamycin complex 2 subunit MAPKAP1 (522 aa).

An interaction with MAP3K2 region spans residues 2–184; the sequence is GFLDNPTIIL…KKIDVYLPLH (183 aa). The segment at 2 to 267 is interaction with NBN; that stretch reads GFLDNPTIIL…GFSTLALVEK (266 aa). Position 86 is a phosphothreonine (Thr86). A phosphoserine mark is found at Ser128, Ser186, Ser315, and Ser356. Residues 139–267 enclose the CRIM domain; it reads QSILSVRLEQ…GFSTLALVEK (129 aa). Positions 279-353 are SIN1-type RBD; sequence LFVRINAAHG…QSAWEFCLVR (75 aa). In terms of domain architecture, SIN1-type PH spans 382 to 487; it reads HYKSFKVSMI…IVLKVNYILE (106 aa). A 1,2-diacyl-sn-glycero-3-phospho-(1D-myo-inositol-3,4,5-trisphosphate) is bound at residue Arg393. A Phosphothreonine modification is found at Thr398. Residues Lys428 and Lys464 each contribute to the a 1,2-diacyl-sn-glycero-3-phospho-(1D-myo-inositol-3,4,5-trisphosphate) site. The segment at 468–522 is interaction with ATF2; it reads FESDAATVNEIVLKVNYILESRASTARADYFAQKQRKLNRRTSFSFQKEKKSGQQ. Ser510 carries the phosphoserine modification.

It belongs to the SIN1 family. In terms of assembly, component of the mechanistic target of rapamycin complex 2 (mTORC2), consisting in two heterotretramers composed of MTOR, MLST8, RICTOR and MAPKAP1/SIN1. The mTORC2 core complex associates with PRR5/PROTOR1 and/or PRR5L/PROTOR2. Contrary to mTORC1, mTORC2 does not bind to and is not sensitive to FKBP12-rapamycin. Interacts with MAP3K2. Interacts with ATF2. Interacts with MAPK8. Interacts with GTP-bound HRAS and KRAS; inhibiting their activity. Interacts with IFNAR2. Post-translationally, phosphorylation at Ser-128 by PKC promotes relocalization to the perinuclear region, where the mTORC2 complex specifically mediates phosphorylation of SGK1. Phosphorylated at Thr-86 by AKT1 or RPS6KB1 in the presence of growth factors; the effect of this phosphorylation is however unclear. According to two studies, phosphorylation at Thr-86 by AKT1 is part of a positive feedback loop that increases mTORC2 activation. According to another study, phosphorylation at Thr-86 and Thr-398 by RPS6KB1 promotes dissociation from the mTORC2 complex, leading to inhibit mTORC2 signaling. As to expression, present in the lumenal epithelium and glandular epithelium of endometrium (at protein level).

It is found in the cell membrane. The protein localises to the cytoplasmic vesicle. It localises to the endoplasmic reticulum membrane. The protein resides in the early endosome membrane. Its subcellular location is the late endosome membrane. It is found in the lysosome membrane. The protein localises to the golgi apparatus membrane. It localises to the mitochondrion outer membrane. The protein resides in the cytoplasm. Its subcellular location is the perinuclear region. It is found in the nucleus. Phosphatidylinositol 3,4,5-trisphosphate (PI(3,4,5)P3) promotes MTOR activation by relieving MAPKAP1/SIN1-mediated inhibition of MTOR that takes place in absence of PI(3,4,5)P3. Its function is as follows. Component of the mechanistic target of rapamycin complex 2 (mTORC2), which transduces signals from growth factors to pathways involved in proliferation, cytoskeletal organization, lipogenesis and anabolic output. In response to growth factors, mTORC2 phosphorylates and activates AGC protein kinase family members, including AKT (AKT1, AKT2 and AKT3), PKC (PRKCA, PRKCB and PRKCE) and SGK1. In contrast to mTORC1, mTORC2 is nutrient-insensitive. Within the mTORC2 complex, MAPKAP1/SIN1 acts as a substrate adapter which recognizes and binds AGC protein kinase family members for phosphorylation by MTOR. mTORC2 plays a critical role in AKT1 activation by mediating phosphorylation of different sites depending on the context, such as 'Thr-450', 'Ser-473', 'Ser-477' or 'Thr-479', facilitating the phosphorylation of the activation loop of AKT1 on 'Thr-308' by PDPK1/PDK1 which is a prerequisite for full activation. mTORC2 catalyzes the phosphorylation of SGK1 at 'Ser-422' and of PRKCA on 'Ser-657'. The mTORC2 complex also phosphorylates various proteins involved in insulin signaling, such as FBXW8 and IGF2BP1. mTORC2 acts upstream of Rho GTPases to regulate the actin cytoskeleton, probably by activating one or more Rho-type guanine nucleotide exchange factors. mTORC2 promotes the serum-induced formation of stress-fibers or F-actin. MAPKAP1 inhibits MAP3K2 by preventing its dimerization and autophosphorylation. Inhibits HRAS and KRAS independently of mTORC2 complex. Enhances osmotic stress-induced phosphorylation of ATF2 and ATF2-mediated transcription. Involved in ciliogenesis, regulates cilia length through its interaction with CCDC28B independently of mTORC2 complex. The polypeptide is Target of rapamycin complex 2 subunit MAPKAP1 (MAPKAP1) (Ovis aries (Sheep)).